The primary structure comprises 243 residues: Small ribosomal subunit protein eS4 (243 aa).

The region spanning 43–105 is the S4 RNA-binding domain; sequence IPLLYIVRDY…TGEHYRVLPN (63 aa).

This sequence belongs to the eukaryotic ribosomal protein eS4 family. As to quaternary structure, part of the 30S ribosomal subunit.

This chain is Small ribosomal subunit protein eS4, found in Pyrococcus furiosus (strain ATCC 43587 / DSM 3638 / JCM 8422 / Vc1).